A 189-amino-acid polypeptide reads, in one-letter code: ATP synthase subunit delta (189 aa).

It belongs to the ATPase delta chain family. In terms of assembly, F-type ATPases have 2 components, F(1) - the catalytic core - and F(0) - the membrane proton channel. F(1) has five subunits: alpha(3), beta(3), gamma(1), delta(1), epsilon(1). F(0) has three main subunits: a(1), b(2) and c(10-14). The alpha and beta chains form an alternating ring which encloses part of the gamma chain. F(1) is attached to F(0) by a central stalk formed by the gamma and epsilon chains, while a peripheral stalk is formed by the delta and b chains.

It localises to the cell inner membrane. Its function is as follows. F(1)F(0) ATP synthase produces ATP from ADP in the presence of a proton or sodium gradient. F-type ATPases consist of two structural domains, F(1) containing the extramembraneous catalytic core and F(0) containing the membrane proton channel, linked together by a central stalk and a peripheral stalk. During catalysis, ATP synthesis in the catalytic domain of F(1) is coupled via a rotary mechanism of the central stalk subunits to proton translocation. Functionally, this protein is part of the stalk that links CF(0) to CF(1). It either transmits conformational changes from CF(0) to CF(1) or is implicated in proton conduction. The protein is ATP synthase subunit delta of Ehrlichia ruminantium (strain Gardel).